A 556-amino-acid chain; its full sequence is Tripartite motif-containing protein 16 (556 aa).

The tract at residues 1–60 (MAELDLIAPGPLTGVTAHPLAPLGPDPVSAIPVEKEDADPLSKSGEETQEQGHDPAELGA) is disordered. The segment covering 33-56 (VEKEDADPLSKSGEETQEQGHDPA) has biased composition (basic and acidic residues). 2 B box-type zinc fingers span residues 64–113 (EDQI…LTEP) and 117–156 (QDLRTCPAHHSPLVSFCHTHQQCICQECGEGEHRGDSTVS). Ser-107 bears the Phosphoserine mark. 2 coiled-coil regions span residues 163 to 266 (NKEV…RLAA) and 312 to 332 (NLIQLLESYKEKLQEFSREEE). At Ser-195 the chain carries Phosphoserine. In terms of domain architecture, B30.2/SPRY spans 347 to 545 (YRTSKPEPRT…RIVDLGEEPE (199 aa)).

This sequence belongs to the TRIM/RBCC family. Homodimerizes via its coiled-coil domain. Heterodimerizes with MID1, TRIM24 and PML. Interacts with Galectin-3/LGALS3 in a ULK1-dependent manner; this interaction mediates autophagy of damage endomembranes. Interacts with BECN1. Interacts with ATG16L1. Interacts with p62/SQSTM and LC3B/MAP1LC3B. Phosphorylated by ULK1. In terms of processing, auto-ubiquitinates via its B-Boxes. As to expression, widely expressed. Expressed in basal keratinocytes.

The protein resides in the cytoplasm. It catalyses the reaction S-ubiquitinyl-[E2 ubiquitin-conjugating enzyme]-L-cysteine + [acceptor protein]-L-lysine = [E2 ubiquitin-conjugating enzyme]-L-cysteine + N(6)-ubiquitinyl-[acceptor protein]-L-lysine.. Its function is as follows. E3 ubiquitin ligase that plays an essential role in the organization of autophagic response and ubiquitination upon lysosomal and phagosomal damages. Plays a role in the stress-induced biogenesis and degradation of protein aggresomes by regulating the p62-KEAP1-NRF2 signaling and particularly by modulating the ubiquitination levels and thus stability of NRF2. Acts as a scaffold protein and facilitates autophagic degradation of protein aggregates by interacting with p62/SQSTM, ATG16L1 and LC3B/MAP1LC3B. In turn, protects the cell against oxidative stress-induced cell death as a consequence of endomembrane damage. The sequence is that of Tripartite motif-containing protein 16 (Trim16) from Mus musculus (Mouse).